The following is a 998-amino-acid chain: Mis18-binding protein 1 (998 aa).

Lys-7 is covalently cross-linked (Glycyl lysine isopeptide (Lys-Gly) (interchain with G-Cter in SUMO2)). 3 positions are modified to phosphoserine: Ser-9, Ser-109, and Ser-134. The segment at 122-153 is disordered; it reads QRDKQEQLTRSSSMLGSPQGEHTKDFPPNTDK. Residues 142 to 153 show a composition bias toward basic and acidic residues; it reads EHTKDFPPNTDK. Ser-169 and Ser-258 each carry phosphoserine. The SANTA domain maps to 336-422; that stretch reads VHLQEWMIKV…MFGFPHNWKE (87 aa). Disordered stretches follow at residues 438-460 and 476-502; these read KTRQ…AEDK and DNSL…KERR. The span at 488–497 shows a compositional bias: polar residues; the sequence is PLNSLEQPTS. Phosphothreonine is present on residues Thr-516 and Thr-578. Ser-638 and Ser-639 each carry phosphoserine. The tract at residues 638–660 is disordered; sequence SSEENEVEIKSRTRARNTKERLN. Residues 644–660 are compositionally biased toward basic and acidic residues; the sequence is VEIKSRTRARNTKERLN. Thr-688 carries the post-translational modification Phosphothreonine. Lys-707 is covalently cross-linked (Glycyl lysine isopeptide (Lys-Gly) (interchain with G-Cter in SUMO2)). Phosphoserine is present on Ser-726. Residues 741 to 796 form the SANT domain; it reads TDDEEWSEQELQKLHCAFTSLPKHKPGFWSDVAMAVGSRTADECQKKYTEEPQGQG. A Glycyl lysine isopeptide (Lys-Gly) (interchain with G-Cter in SUMO2) cross-link involves residue Lys-765. Positions 784 to 821 are disordered; sequence CQKKYTEEPQGQGSRKHGSKKKQANKVQNGEKDSADAK. The span at 797 to 807 shows a compositional bias: basic residues; it reads SRKHGSKKKQA. The span at 812–821 shows a compositional bias: basic and acidic residues; sequence NGEKDSADAK. Glycyl lysine isopeptide (Lys-Gly) (interchain with G-Cter in SUMO2) cross-links involve residues Lys-821, Lys-828, and Lys-847. At Ser-872 the chain carries Phosphoserine. Lys-948 participates in a covalent cross-link: Glycyl lysine isopeptide (Lys-Gly) (interchain with G-Cter in SUMO2). Ser-955 and Ser-985 each carry phosphoserine. The tract at residues 976-998 is disordered; that stretch reads SKYFIDDTESDEEEKDYYFSNSD. Residues 981–990 are compositionally biased toward acidic residues; sequence DDTESDEEEK.

As to quaternary structure, interacts with SP1. Interacts with MIS18A. Identified in a complex containing MIS18A, OIP5/MIS18B, MIS18BP1, RBBP7 and RBBP4. Interacts with KAT7/HBO1. Interacts (via N-terminus) with FLNA (via N-terminus).

It is found in the nucleus. Its subcellular location is the chromosome. The protein localises to the centromere. Required for recruitment of CENPA to centromeres and normal chromosome segregation during mitosis. The polypeptide is Mis18-binding protein 1 (Mis18bp1) (Mus musculus (Mouse)).